Consider the following 61-residue polypeptide: Metallothionein-1F (61 aa).

M1 is subject to N-acetylmethionine. The tract at residues 1 to 29 (MDPNCSCAAGVSCTCAGSCKCKECKCTSC) is beta. The a divalent metal cation site is built by C5, C7, C13, C15, C19, C21, C24, C26, C29, C33, C34, C36, C37, C41, C44, C48, C50, and C57. The interval 30–61 (KKSCCSCCPVGCSKCAQGCVCKGASEKCSCCD) is alpha. S58 carries the phosphoserine modification. The a divalent metal cation site is built by C59 and C60.

This sequence belongs to the metallothionein superfamily. Type 1 family. As to quaternary structure, monomer.

Its function is as follows. Metallothioneins have a high content of cysteine residues that bind various heavy metals; these proteins are transcriptionally regulated by both heavy metals and glucocorticoids. The sequence is that of Metallothionein-1F (MT1F) from Homo sapiens (Human).